We begin with the raw amino-acid sequence, 1582 residues long: Alpha-2-macroglobulin (1582 aa).

Positions 1–15 (MICLAALAVAVPARA) are cleaved as a signal peptide. The isoglutamyl cysteine thioester (Cys-Gln) cross-link spans 1080 to 1083 (CAEQ).

It belongs to the protease inhibitor I39 (alpha-2-macroglobulin) family. Bacterial alpha-2-macroglobulin subfamily.

Protects the bacterial cell from host peptidases. The sequence is that of Alpha-2-macroglobulin from Ralstonia nicotianae (strain ATCC BAA-1114 / GMI1000) (Ralstonia solanacearum).